Consider the following 129-residue polypeptide: Large ribosomal subunit protein bL20 (129 aa).

Residues 1–17 show a composition bias toward basic residues; the sequence is MARVKRSVNAHKKRRSV. Positions 1–29 are disordered; that stretch reads MARVKRSVNAHKKRRSVLKASKGYRGQRS.

Belongs to the bacterial ribosomal protein bL20 family.

Binds directly to 23S ribosomal RNA and is necessary for the in vitro assembly process of the 50S ribosomal subunit. It is not involved in the protein synthesizing functions of that subunit. The chain is Large ribosomal subunit protein bL20 from Mycobacterium ulcerans (strain Agy99).